The primary structure comprises 427 residues: Glutamate-1-semialdehyde 2,1-aminomutase (427 aa).

Residue Lys265 is modified to N6-(pyridoxal phosphate)lysine.

The protein belongs to the class-III pyridoxal-phosphate-dependent aminotransferase family. HemL subfamily. As to quaternary structure, homodimer. Requires pyridoxal 5'-phosphate as cofactor.

Its subcellular location is the cytoplasm. The enzyme catalyses (S)-4-amino-5-oxopentanoate = 5-aminolevulinate. Its pathway is porphyrin-containing compound metabolism; protoporphyrin-IX biosynthesis; 5-aminolevulinate from L-glutamyl-tRNA(Glu): step 2/2. The sequence is that of Glutamate-1-semialdehyde 2,1-aminomutase from Pseudomonas aeruginosa (strain LESB58).